The sequence spans 260 residues: Shikimate dehydrogenase (260 aa).

Residue K71 is the Proton acceptor of the active site. G124 to A128 serves as a coordination point for NADP(+).

The protein belongs to the shikimate dehydrogenase family.

It carries out the reaction shikimate + NADP(+) = 3-dehydroshikimate + NADPH + H(+). It participates in metabolic intermediate biosynthesis; chorismate biosynthesis; chorismate from D-erythrose 4-phosphate and phosphoenolpyruvate: step 4/7. The polypeptide is Shikimate dehydrogenase (aroE) (Sulfurisphaera tokodaii (strain DSM 16993 / JCM 10545 / NBRC 100140 / 7) (Sulfolobus tokodaii)).